The following is a 183-amino-acid chain: Protein Syd (183 aa).

Belongs to the Syd family.

It is found in the cell inner membrane. Functionally, interacts with the SecY protein in vivo. May bind preferentially to an uncomplexed state of SecY, thus functioning either as a chelating agent for excess SecY in the cell or as a regulatory factor that negatively controls the translocase function. The protein is Protein Syd of Idiomarina loihiensis (strain ATCC BAA-735 / DSM 15497 / L2-TR).